The chain runs to 156 residues: MSRRHKAEKREINPDPKFGDLVVTKFMNAIMLDGKKSVAENIVYGAFDAVQGKSKQEPLSVFHSALDNIAPHVEVRSRRVGGATYQVPVDVRPERRQALAIRWLIAAARKRNETTMIDRLSGELLDASNNRGSAVKKREDTHKMADANRAFSHYRW.

Belongs to the universal ribosomal protein uS7 family. In terms of assembly, part of the 30S ribosomal subunit. Contacts proteins S9 and S11.

In terms of biological role, one of the primary rRNA binding proteins, it binds directly to 16S rRNA where it nucleates assembly of the head domain of the 30S subunit. Is located at the subunit interface close to the decoding center, probably blocks exit of the E-site tRNA. The polypeptide is Small ribosomal subunit protein uS7 (Rhizobium etli (strain ATCC 51251 / DSM 11541 / JCM 21823 / NBRC 15573 / CFN 42)).